Consider the following 79-residue polypeptide: Protein FAM236A (79 aa).

The protein belongs to the FAM236 family.

This chain is Protein FAM236A, found in Homo sapiens (Human).